The chain runs to 342 residues: S-adenosylmethionine:tRNA ribosyltransferase-isomerase (342 aa).

It belongs to the QueA family. In terms of assembly, monomer.

It localises to the cytoplasm. It catalyses the reaction 7-aminomethyl-7-carbaguanosine(34) in tRNA + S-adenosyl-L-methionine = epoxyqueuosine(34) in tRNA + adenine + L-methionine + 2 H(+). It functions in the pathway tRNA modification; tRNA-queuosine biosynthesis. Functionally, transfers and isomerizes the ribose moiety from AdoMet to the 7-aminomethyl group of 7-deazaguanine (preQ1-tRNA) to give epoxyqueuosine (oQ-tRNA). This chain is S-adenosylmethionine:tRNA ribosyltransferase-isomerase, found in Streptococcus pneumoniae serotype 4 (strain ATCC BAA-334 / TIGR4).